The chain runs to 116 residues: Ribosome-binding factor A (116 aa).

It belongs to the RbfA family. As to quaternary structure, monomer. Binds 30S ribosomal subunits, but not 50S ribosomal subunits or 70S ribosomes.

The protein localises to the cytoplasm. Its function is as follows. One of several proteins that assist in the late maturation steps of the functional core of the 30S ribosomal subunit. Associates with free 30S ribosomal subunits (but not with 30S subunits that are part of 70S ribosomes or polysomes). Required for efficient processing of 16S rRNA. May interact with the 5'-terminal helix region of 16S rRNA. The polypeptide is Ribosome-binding factor A (Halalkalibacterium halodurans (strain ATCC BAA-125 / DSM 18197 / FERM 7344 / JCM 9153 / C-125) (Bacillus halodurans)).